We begin with the raw amino-acid sequence, 88 residues long: Protein Aeq5-like1 (88 aa).

Residues 1–20 (MKSVIAVLVLSLVLVNFTQA) form the signal peptide. Disulfide bonds link Cys29-Cys68, Cys33-Cys64, Cys40-Cys56, and Cys47-Cys53.

As to expression, is expressed in the ectodermal cells of gastrulae and planulae. Is also noticeable in the endoderm in late planulae. In the primary polyps, is expressed in both ectoderm (sensory neurons) and endoderm (ganglions). Is not expressed in nematocytes.

Its function is as follows. Probable neuropeptide. The sequence is that of Protein Aeq5-like1 from Nematostella vectensis (Starlet sea anemone).